The primary structure comprises 305 residues: UDP-3-O-acyl-N-acetylglucosamine deacetylase (305 aa).

3 residues coordinate Zn(2+): His-79, His-238, and Asp-242. Residue His-265 is the Proton donor of the active site.

Belongs to the LpxC family. Zn(2+) is required as a cofactor.

It catalyses the reaction a UDP-3-O-[(3R)-3-hydroxyacyl]-N-acetyl-alpha-D-glucosamine + H2O = a UDP-3-O-[(3R)-3-hydroxyacyl]-alpha-D-glucosamine + acetate. It functions in the pathway glycolipid biosynthesis; lipid IV(A) biosynthesis; lipid IV(A) from (3R)-3-hydroxytetradecanoyl-[acyl-carrier-protein] and UDP-N-acetyl-alpha-D-glucosamine: step 2/6. Its function is as follows. Catalyzes the hydrolysis of UDP-3-O-myristoyl-N-acetylglucosamine to form UDP-3-O-myristoylglucosamine and acetate, the committed step in lipid A biosynthesis. The polypeptide is UDP-3-O-acyl-N-acetylglucosamine deacetylase (Shigella boydii serotype 4 (strain Sb227)).